The primary structure comprises 642 residues: Kinesin-like protein KIN-7L (642 aa).

Residues lysine 3 to valine 337 enclose the Kinesin motor domain. Positions proline 12 to threonine 27 are enriched in low complexity. The tract at residues proline 12–tryptophan 33 is disordered. Glycine 94 to threonine 101 lines the ATP pocket. Coiled-coil stretches lie at residues valine 343–serine 428 and arginine 540–alanine 612.

This sequence belongs to the TRAFAC class myosin-kinesin ATPase superfamily. Kinesin family. KIN-7 subfamily.

The chain is Kinesin-like protein KIN-7L from Oryza sativa subsp. japonica (Rice).